The following is a 355-amino-acid chain: uncharacterized protein (355 aa).

Residues 1–104 (MGTKGLPLYP…EQAKTVQGGR (104 aa)) are disordered. Position 19 is an N6-acetyllysine (Lys19). Acidic residues predominate over residues 45-54 (EEGTDLEGDM). Position 175 is a phosphoserine (Ser175). Disordered stretches follow at residues 247–310 (PRGS…AAYK) and 325–355 (SITSLSSRTTELPAADPFALAPFPSKSGKKP). Tyr293 is modified (phosphotyrosine). Phosphoserine is present on Ser294. The span at 325–334 (SITSLSSRTT) shows a compositional bias: polar residues. A compositionally biased stretch (low complexity) spans 336–348 (LPAADPFALAPFP).

This is an uncharacterized protein from Homo sapiens (Human).